Here is a 492-residue protein sequence, read N- to C-terminus: ATP synthase subunit beta, chloroplastic (492 aa).

Position 170 to 177 (170 to 177 (GGAGVGKT)) interacts with ATP.

It belongs to the ATPase alpha/beta chains family. As to quaternary structure, F-type ATPases have 2 components, CF(1) - the catalytic core - and CF(0) - the membrane proton channel. CF(1) has five subunits: alpha(3), beta(3), gamma(1), delta(1), epsilon(1). CF(0) has four main subunits: a(1), b(1), b'(1) and c(9-12).

It localises to the plastid. Its subcellular location is the chloroplast thylakoid membrane. The catalysed reaction is ATP + H2O + 4 H(+)(in) = ADP + phosphate + 5 H(+)(out). Produces ATP from ADP in the presence of a proton gradient across the membrane. The catalytic sites are hosted primarily by the beta subunits. This chain is ATP synthase subunit beta, chloroplastic, found in Angiopteris lygodiifolia (Turnip fern).